The sequence spans 357 residues: Protein BMRF2 (357 aa).

At 1-11 (MFSCKQHLSLG) the chain is on the virion surface side. Residues 12–32 (ACVFCLGLLASTPFIWCFVFA) are membrane-embedded. Residues 33–46 (NLLSLEIFSPWQTH) lie on the Intravirion side of the membrane. The chain crosses the lipid bilayer at residues 47 to 67 (VYRLGFPTACLMAVLWTLVPA). At 68–70 (KHA) the chain is on the virion surface side. Positions 71-91 (VRAVTPAIMLNIASALIFFSL) form a transmembrane segment. The Intravirion portion of the chain corresponds to 92–98 (RVYSTST). The chain crosses the lipid bilayer at residues 99–121 (WVSAPCLFLANLPLLCLWPRLAI). At 122–133 (EIVYICPAIHQR) the chain is on the virion surface side. The segment at 134–154 (FFELGLLLACTIFALSVVSRA) is a transmembrane helix. The Intravirion portion of the chain corresponds to 155–158 (LEVS). Positions 159-179 (AVFMSPFFIFLALGSGSLAGA) form a transmembrane segment. Residues 180–217 (RRNQIYTSGLERRRSIFCARGDHSVASLKETLHKCPWD) are Virion surface-facing. The Integrin binding site signature appears at 199–201 (RGD). The hydrophobic stretch at 218–238 (LLAISALTVLVVCVMIVLHVH) threads the membrane. The Intravirion portion of the chain corresponds to 239–240 (AE). The hydrophobic stretch at 241 to 261 (VFFGLSRYLPLFLCGAMASGG) threads the membrane. The Virion surface portion of the chain corresponds to 262-267 (LYLGHS). Positions 268–288 (SIIACVMATLCTLSSVVVYFL) form a transmembrane segment. Over 289–298 (HETLGPLGKT) the chain is Intravirion. A transmembrane span lies at residues 299-319 (VLFISIFVYYFSGVAALSAAM). Topologically, residues 320-335 (RYKLKKFVNGPLVHLR) are virion surface. Over 336–356 (VVYMCCFVFTFCEYLLVTFIK) the chain traverses the membrane. Ser-357 is a topological domain (intravirion).

The protein belongs to the herpesviridae BMRF2 family. In terms of assembly, interacts with BDLF2. Interacts with host beta1 integrin family. Extensively glycosylated by O-linked oligosaccharides.

The protein resides in the virion membrane. Its subcellular location is the host cell membrane. In terms of biological role, facilitates virus attachment to oral epithelial cells by binding to host beta1 integrin family. Participates in rearrangement of cellular actin to increase intercellular contacts by binding BDLF2 and thereby promote virus cell-to-cell spreading. The polypeptide is Protein BMRF2 (Homo sapiens (Human)).